We begin with the raw amino-acid sequence, 474 residues long: ATP synthase subunit beta (474 aa).

An ATP-binding site is contributed by 151–158 (GGAGVGKT).

The protein belongs to the ATPase alpha/beta chains family. As to quaternary structure, F-type ATPases have 2 components, CF(1) - the catalytic core - and CF(0) - the membrane proton channel. CF(1) has five subunits: alpha(3), beta(3), gamma(1), delta(1), epsilon(1). CF(0) has four main subunits: a(1), b(1), b'(1) and c(9-12).

The protein resides in the cell inner membrane. It catalyses the reaction ATP + H2O + 4 H(+)(in) = ADP + phosphate + 5 H(+)(out). In terms of biological role, produces ATP from ADP in the presence of a proton gradient across the membrane. The catalytic sites are hosted primarily by the beta subunits. This chain is ATP synthase subunit beta, found in Roseobacter denitrificans (strain ATCC 33942 / OCh 114) (Erythrobacter sp. (strain OCh 114)).